Here is a 151-residue protein sequence, read N- to C-terminus: D-aminoacyl-tRNA deacylase (151 aa).

The Gly-cisPro motif, important for rejection of L-amino acids signature appears at 137–138 (GP).

It belongs to the DTD family. Homodimer.

Its subcellular location is the cytoplasm. It carries out the reaction glycyl-tRNA(Ala) + H2O = tRNA(Ala) + glycine + H(+). The enzyme catalyses a D-aminoacyl-tRNA + H2O = a tRNA + a D-alpha-amino acid + H(+). An aminoacyl-tRNA editing enzyme that deacylates mischarged D-aminoacyl-tRNAs. Also deacylates mischarged glycyl-tRNA(Ala), protecting cells against glycine mischarging by AlaRS. Acts via tRNA-based rather than protein-based catalysis; rejects L-amino acids rather than detecting D-amino acids in the active site. By recycling D-aminoacyl-tRNA to D-amino acids and free tRNA molecules, this enzyme counteracts the toxicity associated with the formation of D-aminoacyl-tRNA entities in vivo and helps enforce protein L-homochirality. The chain is D-aminoacyl-tRNA deacylase from Protochlamydia amoebophila (strain UWE25).